Reading from the N-terminus, the 302-residue chain is MGDMSDLEVTCLQDYERYLHSERQLSAHTVHNYLYELNRVSTLLPKDVTLLNVGREHWQQVLAKLHRKGLSPRSLSLCLSAIKQWGEFLLREGMIAVNPAKGLSAPKQAKPLPKNMDVDSLTHLLEIEGTDPLTLRDKAMMELFYSSGLRLAELAALNLSSVQYDLREVRVLGKGNKERIVPVGSYAIKALEAWLVCRQQIPCEDCALFVTGKGRRLSHRSIQSRMAKWGQEQALSVRVHPHKLRHSFATHMLESSADLRAVQELLGHANLSTTQIYTSLDFQHLAKVYDSAHPRAKKQQDK.

Positions 6 to 90 (DLEVTCLQDY…AIKQWGEFLL (85 aa)) constitute a Core-binding (CB) domain. Residues 111 to 290 (PLPKNMDVDS…DFQHLAKVYD (180 aa)) enclose the Tyr recombinase domain. Residues Arg-150, Lys-174, His-242, Arg-245, and His-268 contribute to the active site. The O-(3'-phospho-DNA)-tyrosine intermediate role is filled by Tyr-277.

The protein belongs to the 'phage' integrase family. XerC subfamily. As to quaternary structure, forms a cyclic heterotetrameric complex composed of two molecules of XerC and two molecules of XerD.

The protein localises to the cytoplasm. Site-specific tyrosine recombinase, which acts by catalyzing the cutting and rejoining of the recombining DNA molecules. The XerC-XerD complex is essential to convert dimers of the bacterial chromosome into monomers to permit their segregation at cell division. It also contributes to the segregational stability of plasmids. This chain is Tyrosine recombinase XerC, found in Shewanella putrefaciens (strain CN-32 / ATCC BAA-453).